We begin with the raw amino-acid sequence, 349 residues long: Phosphoribosylformylglycinamidine cyclo-ligase (349 aa).

It belongs to the AIR synthase family.

The protein resides in the cytoplasm. The catalysed reaction is 2-formamido-N(1)-(5-O-phospho-beta-D-ribosyl)acetamidine + ATP = 5-amino-1-(5-phospho-beta-D-ribosyl)imidazole + ADP + phosphate + H(+). It participates in purine metabolism; IMP biosynthesis via de novo pathway; 5-amino-1-(5-phospho-D-ribosyl)imidazole from N(2)-formyl-N(1)-(5-phospho-D-ribosyl)glycinamide: step 2/2. This chain is Phosphoribosylformylglycinamidine cyclo-ligase, found in Listeria monocytogenes serotype 4a (strain HCC23).